Consider the following 1154-residue polypeptide: ATP-dependent helicase/deoxyribonuclease subunit B (1154 aa).

In terms of domain architecture, UvrD-like helicase ATP-binding spans 1 to 284; it reads MSVRFIIGRS…EQLRHNVRHK (284 aa). 8-15 lines the ATP pocket; sequence GRSGSGKT. Residues 279–583 form the UvrD-like helicase C-terminal domain; sequence HNVRHKHEEL…QFSLVPPATD (305 aa). Positions 799, 1120, 1123, and 1129 each coordinate [4Fe-4S] cluster.

This sequence belongs to the helicase family. AddB/RexB type 1 subfamily. As to quaternary structure, heterodimer of AddA and AddB. The cofactor is Mg(2+). Requires [4Fe-4S] cluster as cofactor.

Functionally, the heterodimer acts as both an ATP-dependent DNA helicase and an ATP-dependent, dual-direction single-stranded exonuclease. Recognizes the chi site generating a DNA molecule suitable for the initiation of homologous recombination. The AddB subunit has 5' -&gt; 3' nuclease activity but not helicase activity. In Anoxybacillus flavithermus (strain DSM 21510 / WK1), this protein is ATP-dependent helicase/deoxyribonuclease subunit B.